An 85-amino-acid chain; its full sequence is uncharacterized protein (85 aa).

The protein localises to the mitochondrion. This is an uncharacterized protein from Paramecium tetraurelia.